The primary structure comprises 158 residues: Arginine repressor (158 aa).

This sequence belongs to the ArgR family.

The protein resides in the cytoplasm. It functions in the pathway amino-acid biosynthesis; L-arginine biosynthesis [regulation]. Regulates arginine biosynthesis genes. The polypeptide is Arginine repressor (Anaeromyxobacter sp. (strain Fw109-5)).